A 232-amino-acid polypeptide reads, in one-letter code: Aliphatic sulfonates import ATP-binding protein SsuB 2 (232 aa).

The 216-residue stretch at 1 to 216 folds into the ABC transporter domain; the sequence is MDIRVDRKAF…PRDRRDPLLA (216 aa). Residue 33–40 coordinates ATP; that stretch reads GPSGCGKS.

This sequence belongs to the ABC transporter superfamily. Aliphatic sulfonates importer (TC 3.A.1.17.2) family. In terms of assembly, the complex is composed of two ATP-binding proteins (SsuB), two transmembrane proteins (SsuC) and a solute-binding protein (SsuA).

The protein resides in the cell inner membrane. The catalysed reaction is ATP + H2O + aliphatic sulfonate-[sulfonate-binding protein]Side 1 = ADP + phosphate + aliphatic sulfonateSide 2 + [sulfonate-binding protein]Side 1.. Its function is as follows. Part of the ABC transporter complex SsuABC involved in aliphatic sulfonates import. Responsible for energy coupling to the transport system. The protein is Aliphatic sulfonates import ATP-binding protein SsuB 2 of Pseudomonas syringae pv. tomato (strain ATCC BAA-871 / DC3000).